The chain runs to 804 residues: Leucine--tRNA ligase (804 aa).

The 'HIGH' region signature appears at Pro-39–His-50. The short motif at Lys-573–Ser-577 is the 'KMSKS' region element. Lys-576 is a binding site for ATP.

It belongs to the class-I aminoacyl-tRNA synthetase family.

It is found in the cytoplasm. It carries out the reaction tRNA(Leu) + L-leucine + ATP = L-leucyl-tRNA(Leu) + AMP + diphosphate. This Lactobacillus helveticus (strain DPC 4571) protein is Leucine--tRNA ligase.